We begin with the raw amino-acid sequence, 157 residues long: SsrA-binding protein (157 aa).

Residues 135-151 (DKRETEKKRDWSREKGR) are compositionally biased toward basic and acidic residues. The disordered stretch occupies residues 135–157 (DKRETEKKRDWSREKGRLLRARG).

It belongs to the SmpB family.

The protein resides in the cytoplasm. Functionally, required for rescue of stalled ribosomes mediated by trans-translation. Binds to transfer-messenger RNA (tmRNA), required for stable association of tmRNA with ribosomes. tmRNA and SmpB together mimic tRNA shape, replacing the anticodon stem-loop with SmpB. tmRNA is encoded by the ssrA gene; the 2 termini fold to resemble tRNA(Ala) and it encodes a 'tag peptide', a short internal open reading frame. During trans-translation Ala-aminoacylated tmRNA acts like a tRNA, entering the A-site of stalled ribosomes, displacing the stalled mRNA. The ribosome then switches to translate the ORF on the tmRNA; the nascent peptide is terminated with the 'tag peptide' encoded by the tmRNA and targeted for degradation. The ribosome is freed to recommence translation, which seems to be the essential function of trans-translation. The polypeptide is SsrA-binding protein (Rhodopseudomonas palustris (strain BisB5)).